The chain runs to 400 residues: Putative niacin/nicotinamide transporter NiaP (400 aa).

Topologically, residues 1–14 (MGKQQPISQRKLLG) are cytoplasmic. The helical transmembrane segment at 15 to 35 (VAGLGWLFDAMDVGILSFIIA) threads the bilayer. At 36–49 (ALHVEWNLSPEEMK) the chain is on the extracellular side. A helical membrane pass occupies residues 50-70 (WIGSVNSIGMAAGAFLFGLLA). Topologically, residues 71–77 (DRIGRKK) are cytoplasmic. Transmembrane regions (helical) follow at residues 78–98 (VFII…FVTS) and 99–119 (LSAF…ELPV). At 120-142 (ASTLVSEAVVPEKRGRVIVLLES) the chain is on the cytoplasmic side. Residues 143–163 (FWAVGWLAAALISYFVIPSFG) form a helical membrane-spanning segment. Over 164-165 (WQ) the chain is Extracellular. Residues 166–186 (AALLLTALTAFYALYLRTSLP) form a helical membrane-spanning segment. Residues 187-217 (DSPKYESLSAKKRSMWENVKSVWARQYIRPT) are Cytoplasmic-facing. A helical membrane pass occupies residues 218 to 238 (VMLSIVWFCVVFSYYGMFLWL). Residues 239-253 (PSVMLLKGFSMIQSF) are Extracellular-facing. A helical membrane pass occupies residues 254 to 274 (EYVLLMTLAQLPGYFSAAWLI). The Cytoplasmic segment spans residues 275 to 280 (EKAGRK). A helical transmembrane segment spans residues 281–301 (WILVVYLIGTAGSAYFFGTAD). Residues 302–304 (SLS) lie on the Extracellular side of the membrane. A helical transmembrane segment spans residues 305–325 (LLLTAGVLLSFFNLGAWGVLY). At 326 to 343 (AYTPEQYPTAIRATGSGT) the chain is on the cytoplasmic side. A helical membrane pass occupies residues 344–364 (TAAFGRIGGIFGPLLVGTLAA). At 365-370 (RHISFS) the chain is on the extracellular side. A helical membrane pass occupies residues 371-391 (VIFSIFCIAILLAVACILIMG). The Cytoplasmic segment spans residues 392–400 (KETKQTELE).

Belongs to the major facilitator superfamily. Sugar transporter (TC 2.A.1.1) family.

It is found in the cell membrane. Its function is as follows. Probably involved in the uptake of amidated and deamidated forms of niacin. Increases the growth rate of E.coli that is unable to make niacin de novo; confers increased sensitivity to the toxic niacin analog 6-amino-nicotinamide to wild-type E.coli. There is probably another mechanism for niacin uptake. This is Putative niacin/nicotinamide transporter NiaP from Bacillus subtilis (strain 168).